Reading from the N-terminus, the 484-residue chain is uncharacterized protein (484 aa).

In terms of domain architecture, N-acetyltransferase spans 334–484; it reads IIIRQITDND…ENEWIYEVNL (151 aa).

This is an uncharacterized protein from Methanocaldococcus jannaschii (strain ATCC 43067 / DSM 2661 / JAL-1 / JCM 10045 / NBRC 100440) (Methanococcus jannaschii).